The following is a 79-amino-acid chain: Small ribosomal subunit protein bS16cz (79 aa).

It belongs to the bacterial ribosomal protein bS16 family.

The protein localises to the plastid. It is found in the chloroplast. This Arabidopsis thaliana (Mouse-ear cress) protein is Small ribosomal subunit protein bS16cz.